Reading from the N-terminus, the 434-residue chain is MEKSVNVIGAGLAGSEAAWQLVKRGVKVDLYEMRPVKQTPAHHTDKFAELVCTNSLRANGLTNAVGVIKEEMRILDSIIIEAADKASVPAGGALAVDRHEFSGYITDKVKNHPLVTVHTEEVTTIPEGPTIIATGPLTSPALADEIKQLTGEEYLYFYDAAAPIIEKDSIDMDKVYLKSRYDKGEAAYLNCPMSEEEFNAFYEALVTAETAALKEFEKEVFFEGCMPIEVMAKRGIKTMLFGPLKPVGLEDPKTGKRPYAVLQLRQDDAAGTLYNMVGFQTHLKWGEQKRVFGMIPGLENAEIVRYGVMHRNTFINSPTVLEPTYQLKTRNDLFFAGQMTGVEGYVESAASGLAAGINAANFVEEKELVVFPAETAIGSLAHYITSASKKSFQPMNVNFGLFPELETKIRAKQERNEKLAERALNAIKRVAEEL.

Residue glycine 9 to glycine 14 coordinates FAD.

Belongs to the MnmG family. TrmFO subfamily. Requires FAD as cofactor.

Its subcellular location is the cytoplasm. It carries out the reaction uridine(54) in tRNA + (6R)-5,10-methylene-5,6,7,8-tetrahydrofolate + NADH + H(+) = 5-methyluridine(54) in tRNA + (6S)-5,6,7,8-tetrahydrofolate + NAD(+). The enzyme catalyses uridine(54) in tRNA + (6R)-5,10-methylene-5,6,7,8-tetrahydrofolate + NADPH + H(+) = 5-methyluridine(54) in tRNA + (6S)-5,6,7,8-tetrahydrofolate + NADP(+). Catalyzes the folate-dependent formation of 5-methyl-uridine at position 54 (M-5-U54) in all tRNAs. This Listeria monocytogenes serotype 4b (strain F2365) protein is Methylenetetrahydrofolate--tRNA-(uracil-5-)-methyltransferase TrmFO.